The following is a 116-amino-acid chain: Ribosome-binding factor A (116 aa).

The protein belongs to the RbfA family. In terms of assembly, monomer. Binds 30S ribosomal subunits, but not 50S ribosomal subunits or 70S ribosomes.

It is found in the cytoplasm. One of several proteins that assist in the late maturation steps of the functional core of the 30S ribosomal subunit. Associates with free 30S ribosomal subunits (but not with 30S subunits that are part of 70S ribosomes or polysomes). Required for efficient processing of 16S rRNA. May interact with the 5'-terminal helix region of 16S rRNA. This chain is Ribosome-binding factor A, found in Buchnera aphidicola subsp. Cinara cedri (strain Cc).